A 450-amino-acid chain; its full sequence is MERTTIMTLDFSKPGEAGYQSGFANEFATEALPGALPHARNSPQRAPYGLYAEQFSGTAFTAPRGHNRRSWLYRIRPAAVHRPFELVSGERRIVAEFGDSDDVPPTPPNQLRWDPLPMPAQPTDFVDGWVTMAGNGSAAAMSGCAIHLYAANRSMRERFFYSADGELLIVPQEGRLFIMTELGRLDVEPFEIAVIPRGVRFAVALPDGRARGYVCENFGALLRLPDLGPIGSNGLANPRDFLTPHASYEDREGAFELVAKLNGRLWRADIDHSPFDVVAWHGNYAPYKYDLRHFNTIGSISYDHPDPSIFLVLQSQSDTPGVDAIDFVIFPPRWLAAEDTFRPPWFHRNVASEFMGLVHGVYDAKAEGFVPGGASLHNCMSGHGPDADTFEKASSIDTSKPNKVGDTMAFMFETRTLIRPTRFALDTAQLQANYFECWQGLKKHFNPEQR.

Catalysis depends on His-304, which acts as the Proton acceptor. 2 residues coordinate Fe cation: His-347 and Glu-353. Tyr-362 and His-383 together coordinate homogentisate. His-383 contacts Fe cation.

This sequence belongs to the homogentisate dioxygenase family. As to quaternary structure, hexamer; dimer of trimers. It depends on Fe cation as a cofactor.

It catalyses the reaction homogentisate + O2 = 4-maleylacetoacetate + H(+). It participates in amino-acid degradation; L-phenylalanine degradation; acetoacetate and fumarate from L-phenylalanine: step 4/6. In terms of biological role, involved in the catabolism of homogentisate (2,5-dihydroxyphenylacetate or 2,5-OH-PhAc), a central intermediate in the degradation of phenylalanine and tyrosine. Catalyzes the oxidative ring cleavage of the aromatic ring of homogentisate to yield maleylacetoacetate. The polypeptide is Homogentisate 1,2-dioxygenase (Burkholderia mallei (strain NCTC 10229)).